A 323-amino-acid polypeptide reads, in one-letter code: Voltage-dependent calcium channel gamma-2 subunit (323 aa).

The helical transmembrane segment at 10-30 threads the bilayer; the sequence is MLLTTVGAFAAFSLMTIAVGT. N48 carries N-linked (GlcNAc...) asparagine glycosylation. Helical transmembrane passes span 104–124, 134–154, and 182–202; these read SSIFPILSVILLFMGGLCIAA, IILSAGIFFVSAGLSNIIGII, and FGALSFIIAEMVGVLAVHMFI. The segment at 233 to 261 is disordered; the sequence is YQRRSRSSSRSTEPSHSRDASPVGIKGFN. At S253 the chain carries Phosphoserine. Y271 bears the Phosphotyrosine mark. T321 bears the Phosphothreonine mark.

Belongs to the PMP-22/EMP/MP20 family. CACNG subfamily. As to quaternary structure, the L-type calcium channel is composed of five subunits: alpha-1, alpha-2/delta, beta and gamma. Interacts with the PDZ domains of DLG4/PSD-95 and DLG1/SAP97. May interact with GOPC. Acts as an auxiliary subunit for AMPA-selective glutamate receptors (AMPARs). Found in a complex with GRIA1, GRIA2, GRIA3, GRIA4, CNIH2, CNIH3, CACNG3, CACNG4, CACNG5, CACNG7 and CACNG8. Interacts with GRIA1 and GRIA2. Interacts with MPP2. In terms of processing, phosphorylation of Thr-321 impairs interaction with DLG1 and DLG4. Brain.

The protein resides in the membrane. It is found in the synapse. The protein localises to the synaptosome. Functionally, regulates the trafficking and gating properties of AMPA-selective glutamate receptors (AMPARs). Promotes their targeting to the cell membrane and synapses and modulates their gating properties by slowing their rates of activation, deactivation and desensitization. Does not show subunit-specific AMPA receptor regulation and regulates all AMPAR subunits. Thought to stabilize the calcium channel in an inactivated (closed) state. This Homo sapiens (Human) protein is Voltage-dependent calcium channel gamma-2 subunit (CACNG2).